The following is a 783-amino-acid chain: Coiled-coil domain-containing protein 30 (783 aa).

Positions 1–22 are enriched in basic and acidic residues; the sequence is MSQEKNEMFESEWSKEREREKQ. Disordered regions lie at residues 1–26, 101–191, and 209–231; these read MSQEKNEMFESEWSKEREREKQLASG, LGGK…LTMK, and LLQSQSSGDSSDDSGAQHPSSGE. Residues 22–98 are a coiled coil; the sequence is QLASGLDTAE…LSQEFAQLNH (77 aa). Residues 106-115 are compositionally biased toward polar residues; it reads APSNLITSEN. Basic and acidic residues predominate over residues 131 to 191; sequence IQSRKEETEE…EEKEQQLTMK (61 aa). 2 coiled-coil regions span residues 165–497 and 527–622; these read REGQ…LNVH and DKRI…RIIR. The tract at residues 731 to 755 is disordered; that stretch reads EEIKSKEAMASSKSPEKSPENLVCS.

Belongs to the prefoldin subunit beta family. Expressed in brain, kidney, pancreas, placenta, liver, thymus and prostate.

The sequence is that of Coiled-coil domain-containing protein 30 (CCDC30) from Homo sapiens (Human).